The primary structure comprises 781 residues: Mitochondrial inner membrane m-AAA protease component paraplegin (781 aa).

A mitochondrion-targeting transit peptide spans 1 to 43 (MAAALLLLRALRQSPEPGPWRLWAQLSGRSPGLFSGAGGRRPY). Positions 44 to 105 (VVRGTPIGLA…GSTLYFNTSG (62 aa)) are cleaved as a propeptide — removed in mature form. A disordered region spans residues 105 to 134 (GLKQKNKDDDKPKGKAPEDDEEERRRKERE). Topologically, residues 106-144 (LKQKNKDDDKPKGKAPEDDEEERRRKEREDQMYRERLRT) are mitochondrial matrix. The span at 109–134 (KNKDDDKPKGKAPEDDEEERRRKERE) shows a compositional bias: basic and acidic residues. The chain crosses the membrane as a helical span at residues 145–165 (LFIIAIVMSLLNSLSTSGGSI). Residues 166-248 (SWADFVNEML…DRIPVSYKRT (83 aa)) are Mitochondrial intermembrane-facing. The chain crosses the membrane as a helical span at residues 249–269 (GFFGNALYALGMTAVGLAILW). At 270–781 (YVFRLAGMTG…ASGEEEAPAP (512 aa)) the chain is on the mitochondrial matrix side. A312, G352, C353, G354, K355, T356, and L357 together coordinate ATP. Y505 bears the 3'-nitrotyrosine mark. H574 is a Zn(2+) binding site. E575 is an active-site residue. Zn(2+)-binding residues include H578 and D650. An interaction with PPIF region spans residues 701 to 781 (HEARLLVARA…ASGEEEAPAP (81 aa)).

It in the N-terminal section; belongs to the AAA ATPase family. In the C-terminal section; belongs to the peptidase M41 family. In terms of assembly, forms heterooligomers with AFG3L2; the m-AAA protease is composed of heterohexamers of AFG3L2 and SPG7. Component of the mitochondrial permeability transition pore complex (mPTPC), at least composed of SPG7, VDAC1 and PPIF. Interacts with MAIP1. Zn(2+) is required as a cofactor. Upon import into the mitochondrion, the N-terminal transit peptide is cleaved by the mitochondrial-processing peptidase (MPP) to generate an intermediate form which undergoes a second proteolytic cleavage mediated by proteases AFG3L2 removing an additional N-terminal fragment to generate the proteolytically active mature form.

Its subcellular location is the mitochondrion inner membrane. The enzyme catalyses ATP + H2O = ADP + phosphate + H(+). In terms of biological role, catalytic component of the m-AAA protease, a protease that plays a key role in proteostasis of inner mitochondrial membrane proteins, and which is essential for axonal and neuron development. SPG7 possesses both ATPase and protease activities: the ATPase activity is required to unfold substrates, threading them into the internal proteolytic cavity for hydrolysis into small peptide fragments. The m-AAA protease exerts a dual role in the mitochondrial inner membrane: it mediates the processing of specific regulatory proteins and ensures protein quality control by degrading misfolded polypeptides. Mediates protein maturation of the mitochondrial ribosomal subunit MRPL32/bL32m by catalyzing the cleavage of the presequence of MRPL32/bL32m prior to assembly into the mitochondrial ribosome. Acts as a regulator of calcium in neurons by mediating degradation of SMDT1/EMRE before its assembly with the uniporter complex, limiting the availability of SMDT1/EMRE for MCU assembly and promoting efficient assembly of gatekeeper subunits with MCU. Also regulates mitochondrial calcium by catalyzing degradation of MCU. Plays a role in the formation and regulation of the mitochondrial permeability transition pore (mPTP) and its proteolytic activity is dispensable for this function. The polypeptide is Mitochondrial inner membrane m-AAA protease component paraplegin (Spg7) (Rattus norvegicus (Rat)).